A 455-amino-acid chain; its full sequence is MPLRLLLLLLWLWGLSLQRAETDSEGQTTGELYQRWERYGWECQNTLEATEPPSGLACNGSFDMYACWNYTAANTTARVSCPWYLPWYRQVAAGFVFRQCGSDGQWGSWRDHTQCENPEKNGAFQDQKLILERLQVVYTVGYSLSLATLLLALLILSLFRRLHCTRNYIHMNLFTSFMLRAGAILTRDQLLPPLGPYTGNQTPTLWNQALAACRTAQILTQYCVGANYTWLLVEGVYLHHLLVVVRRSEKGHFRCYLLLGWGAPALFVIPWVIVRYLYENTQCWERNEVKAIWWIIRTPILITILINFLIFIRILGILVSKLRTRQMRCPDYRLRLARSTLTLMPLLGVHEVVFAPVTEEQAEGSLRFAKLAFEIFLSSFQGFLVSVLYCFINKEVQSEIRRLRLSLQEQCPRPHLGQAPRAVPLSSAPQEAAIRNALPSGMLHVPGDEVLESYC.

Positions 1–18 (MPLRLLLLLLWLWGLSLQ) are cleaved as a signal peptide. Residues 19-135 (RAETDSEGQT…DQKLILERLQ (117 aa)) are Extracellular-facing. 3 disulfides stabilise this stretch: C43/C67, C58/C100, and C81/C115. N59, N69, and N74 each carry an N-linked (GlcNAc...) asparagine glycan. The helical transmembrane segment at 136-158 (VVYTVGYSLSLATLLLALLILSL) threads the bilayer. At 159–166 (FRRLHCTR) the chain is on the cytoplasmic side. Residues 167–186 (NYIHMNLFTSFMLRAGAILT) form a helical membrane-spanning segment. Residues 187 to 214 (RDQLLPPLGPYTGNQTPTLWNQALAACR) are Extracellular-facing. The chain crosses the membrane as a helical span at residues 215 to 239 (TAQILTQYCVGANYTWLLVEGVYLH). Residues 240-251 (HLLVVVRRSEKG) are Cytoplasmic-facing. A helical transmembrane segment spans residues 252-275 (HFRCYLLLGWGAPALFVIPWVIVR). Residues 276–290 (YLYENTQCWERNEVK) are Extracellular-facing. A helical transmembrane segment spans residues 291-316 (AIWWIIRTPILITILINFLIFIRILG). Residues 317 to 338 (ILVSKLRTRQMRCPDYRLRLAR) lie on the Cytoplasmic side of the membrane. The chain crosses the membrane as a helical span at residues 339–359 (STLTLMPLLGVHEVVFAPVTE). The Extracellular portion of the chain corresponds to 360–374 (EQAEGSLRFAKLAFE). Residues 375 to 395 (IFLSSFQGFLVSVLYCFINKE) traverse the membrane as a helical segment. Over 396-455 (VQSEIRRLRLSLQEQCPRPHLGQAPRAVPLSSAPQEAAIRNALPSGMLHVPGDEVLESYC) the chain is Cytoplasmic.

It belongs to the G-protein coupled receptor 2 family. May form homodimers and heterodimers with GLP1R. Post-translationally, N-glycosylation is required for cell surface expression and lengthens receptor half-life by preventing degradation in the ER. As to expression, present in the pancreas as well as the gut, adipose tissue, heart, pituitary, and inner layers of the adrenal cortex, whereas it is not found in kidney, spleen, or liver. It is also expressed in several brain regions, including the cerebral cortex, hippocampus, and olfactory bulb.

It localises to the cell membrane. Functionally, this is a receptor for GIP. The activity of this receptor is mediated by G proteins which activate adenylyl cyclase. In Rattus norvegicus (Rat), this protein is Gastric inhibitory polypeptide receptor (Gipr).